Consider the following 134-residue polypeptide: Histone H2A (134 aa).

Over residues 1-11 (MTGGGKSGGKA) the composition is skewed to gly residues. The disordered stretch occupies residues 1–25 (MTGGGKSGGKASGSKNAQSRSSKAG). 2 positions are modified to N6-acetyllysine: K6 and K10. Q107 carries the N5-methylglutamine modification. S131 bears the Phosphoserine mark. Residues 131 to 132 (SQ) carry the [ST]-Q motif motif.

The protein belongs to the histone H2A family. The nucleosome is a histone octamer containing two molecules each of H2A, H2B, H3 and H4 assembled in one H3-H4 heterotetramer and two H2A-H2B heterodimers. The octamer wraps approximately 147 bp of DNA. Post-translationally, phosphorylated to form H2AS128ph (gamma-H2A) in response to DNA double-strand breaks (DSBs) generated by exogenous genotoxic agents and by stalled replication forks. Phosphorylation is dependent on the DNA damage checkpoint kinases mec-1/ATR and tel-1/ATM, spreads on either side of a detected DSB site and may mark the surrounding chromatin for recruitment of proteins required for DNA damage signaling and repair. Gamma-H2A is removed from the DNA prior to the strand invasion-primer extension step of the repair process and subsequently dephosphorylated. Dephosphorylation is necessary for efficient recovery from the DNA damage checkpoint. Acetylated by esa-1 to form H2AK4ac and H2AK7ac.

Its subcellular location is the nucleus. It localises to the chromosome. Its function is as follows. Core component of nucleosome which plays a central role in DNA double strand break (DSB) repair. Nucleosomes wrap and compact DNA into chromatin, limiting DNA accessibility to the cellular machineries which require DNA as a template. Histones thereby play a central role in transcription regulation, DNA repair, DNA replication and chromosomal stability. DNA accessibility is regulated via a complex set of post-translational modifications of histones, also called histone code, and nucleosome remodeling. This is Histone H2A (hh2a) from Neurospora crassa (strain ATCC 24698 / 74-OR23-1A / CBS 708.71 / DSM 1257 / FGSC 987).